The chain runs to 245 residues: TLC domain-containing protein 5 (245 aa).

The next 6 membrane-spanning stretches (helical) occupy residues 1–21 (MAVG…SLYT), 38–58 (LVTF…GFID), 75–95 (VHVL…CIYF), 99–119 (GPLM…ALAL), 162–182 (FLFV…LLFC), and 191–211 (WFVK…MVSI). A TLC domain is found at 29 to 204 (HRSCEWSCRL…VGGVAMYAVS (176 aa)).

It belongs to the TLCD5 family.

The protein localises to the membrane. The chain is TLC domain-containing protein 5 (Tlcd5) from Mus musculus (Mouse).